The sequence spans 152 residues: Flagellar assembly factor FliW (152 aa).

The protein belongs to the FliW family. Interacts with translational regulator CsrA and flagellin(s).

It is found in the cytoplasm. Its function is as follows. Acts as an anti-CsrA protein, binds CsrA and prevents it from repressing translation of its target genes, one of which is flagellin. Binds to flagellin and participates in the assembly of the flagellum. The protein is Flagellar assembly factor FliW of Desulfitobacterium hafniense (strain Y51).